A 189-amino-acid chain; its full sequence is MVPNLDLETAIQIISSLETQLSELEGATKEYENDLEQVISKLKSDLLESQQQNKCNKKQITDLEIQVDELENENIQLRNKIETLQLESDRRLERNVLLEHELLDTKEALQKLRVSKEEATSGETRRNTRSLPSQNKKMKLFKDTIKVSTTSSTLYLQNMAKTNNAARSHCNIPNTQITQSTVIATTSSV.

The stretch at 4–121 forms a coiled coil; it reads NLDLETAIQI…LRVSKEEATS (118 aa). The span at 114–126 shows a compositional bias: basic and acidic residues; it reads VSKEEATSGETRR. The segment at 114–139 is disordered; the sequence is VSKEEATSGETRRNTRSLPSQNKKMK.

The protein belongs to the nudE family. As to quaternary structure, self-associates. Interacts with PAC1.

The protein localises to the nucleus. Its subcellular location is the cytoplasm. It localises to the cytoskeleton. Required for nuclear migration to the bud neck during cell division. Targets cytoplasmic dynein to microtubule plus ends thereby promoting dynein-mediated microtubule sliding along the bud cortex and consequently the movement of the mitotic spindle to the bud neck. This chain is Nuclear distribution protein nudE homolog 1 (NDL1), found in Saccharomyces cerevisiae (strain ATCC 204508 / S288c) (Baker's yeast).